Here is a 179-residue protein sequence, read N- to C-terminus: Peptidyl-tRNA hydrolase (179 aa).

Tyr15 contributes to the tRNA binding site. His20 acts as the Proton acceptor in catalysis. The tRNA site is built by Tyr66, Asn68, and Asn114.

Belongs to the PTH family. Monomer.

The protein resides in the cytoplasm. It carries out the reaction an N-acyl-L-alpha-aminoacyl-tRNA + H2O = an N-acyl-L-amino acid + a tRNA + H(+). Its function is as follows. Hydrolyzes ribosome-free peptidyl-tRNAs (with 1 or more amino acids incorporated), which drop off the ribosome during protein synthesis, or as a result of ribosome stalling. In terms of biological role, catalyzes the release of premature peptidyl moieties from peptidyl-tRNA molecules trapped in stalled 50S ribosomal subunits, and thus maintains levels of free tRNAs and 50S ribosomes. This Chlamydia muridarum (strain MoPn / Nigg) protein is Peptidyl-tRNA hydrolase.